Here is a 136-residue protein sequence, read N- to C-terminus: MGRVRTKTVKRASKALIERYYPKLTLDFQTNKRLCDEIATIQSKRLRNKIAGYTTHLMKRIQKGPVRGISFKLQEEERERKDQYVPEVSALDLSRSNGVLNVDNQTSDLVKSLGLKLPLSVINVSAQRDRRYRKRN.

This sequence belongs to the eukaryotic ribosomal protein eS17 family. In terms of assembly, component of the small ribosomal subunit (SSU). Mature yeast ribosomes consist of a small (40S) and a large (60S) subunit. The 40S small subunit contains 1 molecule of ribosomal RNA (18S rRNA) and 33 different proteins (encoded by 57 genes). The large 60S subunit contains 3 rRNA molecules (25S, 5.8S and 5S rRNA) and 46 different proteins (encoded by 81 genes).

The protein resides in the cytoplasm. Component of the ribosome, a large ribonucleoprotein complex responsible for the synthesis of proteins in the cell. The small ribosomal subunit (SSU) binds messenger RNAs (mRNAs) and translates the encoded message by selecting cognate aminoacyl-transfer RNA (tRNA) molecules. The large subunit (LSU) contains the ribosomal catalytic site termed the peptidyl transferase center (PTC), which catalyzes the formation of peptide bonds, thereby polymerizing the amino acids delivered by tRNAs into a polypeptide chain. The nascent polypeptides leave the ribosome through a tunnel in the LSU and interact with protein factors that function in enzymatic processing, targeting, and the membrane insertion of nascent chains at the exit of the ribosomal tunnel. The protein is Small ribosomal subunit protein eS17B of Saccharomyces cerevisiae (strain ATCC 204508 / S288c) (Baker's yeast).